The primary structure comprises 523 residues: Sucrose 6(F)-phosphate phosphorylase (523 aa).

Sucrose 6(F)-phosphate contacts are provided by residues Asp-58, His-96, 221–223, Glu-264, 326–327, and Lys-434; these read RLD and HD. The active-site Nucleophile is the Asp-223. The Proton donor/acceptor role is filled by Glu-264.

It belongs to the glycosyl hydrolase 13 family. Sucrose phosphorylase subfamily. In terms of assembly, monomer.

It carries out the reaction sucrose 6(F)-phosphate + phosphate = beta-D-fructose 6-phosphate + alpha-D-glucose 1-phosphate. Its function is as follows. Catalyzes the reversible phosphorolysis of sucrose 6(F)-phosphate into alpha-D-glucose 1-phosphate (Glc1P) and D-fructose 6-phosphate. May be involved in a new pathway for the degradation of sucrose, which could become phosphorylated on its fructose moiety during uptake via a PTS system. Shows strict specificity since it does not catalyze reactions with alternative substrates. This is Sucrose 6(F)-phosphate phosphorylase from Ilumatobacter coccineus (strain NBRC 103263 / KCTC 29153 / YM16-304).